The primary structure comprises 453 residues: Probable glycine dehydrogenase (decarboxylating) subunit 1 (453 aa).

This sequence belongs to the GcvP family. N-terminal subunit subfamily. The glycine cleavage system is composed of four proteins: P, T, L and H. In this organism, the P 'protein' is a heterodimer of two subunits.

It carries out the reaction N(6)-[(R)-lipoyl]-L-lysyl-[glycine-cleavage complex H protein] + glycine + H(+) = N(6)-[(R)-S(8)-aminomethyldihydrolipoyl]-L-lysyl-[glycine-cleavage complex H protein] + CO2. The glycine cleavage system catalyzes the degradation of glycine. The P protein binds the alpha-amino group of glycine through its pyridoxal phosphate cofactor; CO(2) is released and the remaining methylamine moiety is then transferred to the lipoamide cofactor of the H protein. In Dictyoglomus turgidum (strain DSM 6724 / Z-1310), this protein is Probable glycine dehydrogenase (decarboxylating) subunit 1.